Consider the following 1055-residue polypeptide: SMC5-SMC6 complex localization factor protein 1 (1055 aa).

BRCT domains follow at residues 2–80 (EDDA…AQSG) and 121–199 (PGAF…LLEK). The segment at 312-332 (KKRKKEKERDSRKDIEHDRST) is disordered. Over residues 318–332 (KERDSRKDIEHDRST) the composition is skewed to basic and acidic residues. The segment at 407–1055 (PRGILNLIES…VMCRSVTEIS (649 aa)) is NSE5-like domain; mediates interaction with SLF2. ANK repeat units lie at residues 804–834 (KGET…DINV), 838–867 (AGWT…EVDL), and 872–901 (DGVT…PVLL). Lys-929 is covalently cross-linked (Glycyl lysine isopeptide (Lys-Gly) (interchain with G-Cter in SUMO2)).

Interacts (via N-terminus) with SLF2; this interaction links RAD18 to the SMC5-SMC6 complex. Interacts (via BRCT domains) with RAD18; this interaction occurs in a SLF2-independent manner. Interacts with SMC6. Interacts (via BRCT domains) with RAD18 (via C-terminus and phosphorylated form); this interaction is required for efficient repair of UV-induced DNA damage.

It localises to the nucleus. It is found in the cytoplasm. The protein localises to the cytoskeleton. The protein resides in the microtubule organizing center. Its subcellular location is the centrosome. Its function is as follows. Plays a role in the DNA damage response (DDR) pathway by regulating postreplication repair of UV-damaged DNA and genomic stability maintenance. The SLF1-SLF2 complex acts to link RAD18 with the SMC5-SMC6 complex at replication-coupled interstrand cross-links (ICL) and DNA double-strand breaks (DSBs) sites on chromatin during DNA repair in response to stalled replication forks. Promotes the recruitment of SLF2 and the SMC5-SMC6 complex to DNA lesions. In Bos taurus (Bovine), this protein is SMC5-SMC6 complex localization factor protein 1.